The sequence spans 226 residues: UPF0319 protein YPO1442/y2728/YP_1333 (226 aa).

An N-terminal signal peptide occupies residues 1–20 (MKLGLVAGMLAVCFSFSSVA).

The protein belongs to the UPF0319 family.

This Yersinia pestis protein is UPF0319 protein YPO1442/y2728/YP_1333.